The primary structure comprises 312 residues: MARENSTFNSDFILLGIFNHSPTHTFLFFLVLAIFSVAFMGNSVMVLLIYLDTQLHTPMYLLLSQLSLMDLMLICTTVPKMAFNYLSGSKSISMAGCATQIFFYTSLLGSECFLLAVMAYDRYTAICHPLRYTNLMSPKICGLMTAFSWILGSTDGIIDVVATFSFSYCGSREIAHFFCDFPSLLILSCSDTSIFEKILFICCIVMIVFPVAIIIASYARVILAVIHMGSGEGRRKAFTTCSSHLLVVGMYYGAALFMYIRPTSDRSPTQDKMVSVFYTILTPMLNPLIYSLRNKEVTRAFMKILGKGKSGE.

The Extracellular segment spans residues 1–25 (MARENSTFNSDFILLGIFNHSPTHT). N5 carries an N-linked (GlcNAc...) asparagine glycan. Residues 26 to 49 (FLFFLVLAIFSVAFMGNSVMVLLI) form a helical membrane-spanning segment. The Cytoplasmic portion of the chain corresponds to 50–57 (YLDTQLHT). The helical transmembrane segment at 58–79 (PMYLLLSQLSLMDLMLICTTVP) threads the bilayer. Topologically, residues 80–100 (KMAFNYLSGSKSISMAGCATQ) are extracellular. C97 and C189 form a disulfide bridge. Residues 101–120 (IFFYTSLLGSECFLLAVMAY) form a helical membrane-spanning segment. Residues 121–139 (DRYTAICHPLRYTNLMSPK) lie on the Cytoplasmic side of the membrane. A helical membrane pass occupies residues 140–158 (ICGLMTAFSWILGSTDGII). The Extracellular portion of the chain corresponds to 159-195 (DVVATFSFSYCGSREIAHFFCDFPSLLILSCSDTSIF). A helical transmembrane segment spans residues 196 to 219 (EKILFICCIVMIVFPVAIIIASYA). Topologically, residues 220–236 (RVILAVIHMGSGEGRRK) are cytoplasmic. Residues 237-259 (AFTTCSSHLLVVGMYYGAALFMY) form a helical membrane-spanning segment. Residues 260–272 (IRPTSDRSPTQDK) are Extracellular-facing. A helical membrane pass occupies residues 273 to 292 (MVSVFYTILTPMLNPLIYSL). Residues 293 to 312 (RNKEVTRAFMKILGKGKSGE) lie on the Cytoplasmic side of the membrane.

It belongs to the G-protein coupled receptor 1 family.

Its subcellular location is the cell membrane. Odorant receptor. This is Olfactory receptor 2M3 (OR2M3) from Homo sapiens (Human).